The chain runs to 285 residues: Probable endonuclease 4 (285 aa).

Residues H69, H109, E145, D179, H182, H216, D229, H231, and E261 each coordinate Zn(2+).

It belongs to the AP endonuclease 2 family. Requires Zn(2+) as cofactor.

It catalyses the reaction Endonucleolytic cleavage to 5'-phosphooligonucleotide end-products.. Endonuclease IV plays a role in DNA repair. It cleaves phosphodiester bonds at apurinic or apyrimidinic (AP) sites, generating a 3'-hydroxyl group and a 5'-terminal sugar phosphate. This Enterobacter sp. (strain 638) protein is Probable endonuclease 4.